Reading from the N-terminus, the 548-residue chain is CTP synthase (548 aa).

The tract at residues 1 to 270 (MNRRSCAFIF…DTKISALLGC (270 aa)) is amidoligase domain. Ser17 is a CTP binding site. Ser17 lines the UTP pocket. ATP-binding positions include 18-23 (SIGKGL) and Asp75. Mg(2+) is bound by residues Asp75 and Glu143. CTP is bound by residues 150–152 (DIE), 190–195 (KTKPSQ), and Lys227. UTP-binding positions include 190-195 (KTKPSQ) and Lys227. One can recognise a Glutamine amidotransferase type-1 domain in the interval 305–548 (YSGLCDAYIS…VRAGLLRKYS (244 aa)). L-glutamine is bound at residue Gly356. The active-site Nucleophile; for glutamine hydrolysis is Cys383. Residues 384–387 (FGFQ), Glu407, and Arg475 contribute to the L-glutamine site. Catalysis depends on residues His521 and Glu523.

The protein belongs to the CTP synthase family. As to quaternary structure, homotetramer.

The enzyme catalyses UTP + L-glutamine + ATP + H2O = CTP + L-glutamate + ADP + phosphate + 2 H(+). It carries out the reaction L-glutamine + H2O = L-glutamate + NH4(+). It catalyses the reaction UTP + NH4(+) + ATP = CTP + ADP + phosphate + 2 H(+). It participates in pyrimidine metabolism; CTP biosynthesis via de novo pathway; CTP from UDP: step 2/2. Allosterically activated by GTP, when glutamine is the substrate; GTP has no effect on the reaction when ammonia is the substrate. The allosteric effector GTP functions by stabilizing the protein conformation that binds the tetrahedral intermediate(s) formed during glutamine hydrolysis. Inhibited by the product CTP, via allosteric rather than competitive inhibition. Functionally, catalyzes the ATP-dependent amination of UTP to CTP with either L-glutamine or ammonia as the source of nitrogen. Regulates intracellular CTP levels through interactions with the four ribonucleotide triphosphates. The chain is CTP synthase from Neorickettsia sennetsu (strain ATCC VR-367 / Miyayama) (Ehrlichia sennetsu).